We begin with the raw amino-acid sequence, 562 residues long: NAD-dependent malic enzyme (562 aa).

The Proton donor role is filled by Tyr101. Arg154 lines the NAD(+) pocket. Lys172 acts as the Proton acceptor in catalysis. Residues Glu243, Asp244, and Asp267 each coordinate a divalent metal cation. NAD(+) contacts are provided by Asp267 and Asn415.

This sequence belongs to the malic enzymes family. As to quaternary structure, homotetramer. It depends on Mg(2+) as a cofactor. Mn(2+) serves as cofactor.

It catalyses the reaction (S)-malate + NAD(+) = pyruvate + CO2 + NADH. It carries out the reaction oxaloacetate + H(+) = pyruvate + CO2. The polypeptide is NAD-dependent malic enzyme (Shewanella baltica (strain OS223)).